The sequence spans 185 residues: MLNQIKQDAQDRMTKSIDALRNSLASVRTGRASPSLLDGIKIKAYGTDTPLNQVASISVSEGRSLVITVFDKNMSKDVEKAIYASDLGLTPTVVGTLIRLNLPPLTEERRKELTKVVHSEGEDTKVAIRNIRRDANQQIKDMLKSKEITEDEVRQGEEDIQKLTDKAIKSVDEVVKSKEQELMTV.

It belongs to the RRF family.

The protein resides in the cytoplasm. Functionally, responsible for the release of ribosomes from messenger RNA at the termination of protein biosynthesis. May increase the efficiency of translation by recycling ribosomes from one round of translation to another. This chain is Ribosome-recycling factor, found in Xylella fastidiosa (strain 9a5c).